A 352-amino-acid polypeptide reads, in one-letter code: 3-dehydroquinate synthase (352 aa).

NAD(+) contacts are provided by residues 60–65 (DGEGAK), 118–119 (TT), Lys-131, Lys-140, and 158–161 (FLET). Residues Glu-173, His-237, and His-253 each contribute to the Zn(2+) site.

Belongs to the sugar phosphate cyclases superfamily. Dehydroquinate synthase family. NAD(+) serves as cofactor. Co(2+) is required as a cofactor. It depends on Zn(2+) as a cofactor.

Its subcellular location is the cytoplasm. It carries out the reaction 7-phospho-2-dehydro-3-deoxy-D-arabino-heptonate = 3-dehydroquinate + phosphate. Its pathway is metabolic intermediate biosynthesis; chorismate biosynthesis; chorismate from D-erythrose 4-phosphate and phosphoenolpyruvate: step 2/7. Catalyzes the conversion of 3-deoxy-D-arabino-heptulosonate 7-phosphate (DAHP) to dehydroquinate (DHQ). The chain is 3-dehydroquinate synthase from Sulfurisphaera tokodaii (strain DSM 16993 / JCM 10545 / NBRC 100140 / 7) (Sulfolobus tokodaii).